The following is a 410-amino-acid chain: Transcription factor rglT (410 aa).

A disordered region spans residues 1 to 24 (MQFDSLPLPPSSSHDTTSVPPLKR). The segment at residues 28 to 55 (CDECRKRKLKCSGEATGCSRCLKQSLPC) is a DNA-binding region (zn(2)-C6 fungal-type). Positions 353–372 (HRTRTVESPNEPGSCSPVSH) are disordered. Polar residues predominate over residues 358–369 (VESPNEPGSCSP).

The protein resides in the nucleus. Functionally, transcription factor that is involved in protection against oxidative stress. Binds to promoter regions of the gliotoxin (GT) biosynthetic genes gliZ, gliF, gliT, gliM, gliA and gtmA. Two related but different DNA motifs (5'-TCGG-3' and 5'-CGGNCGG-3') are specifically enriched among rglT binding sites in GT-inducing conditions. Also indirectly regulates the expression of gliP, gliG, gliH and gliN. Plays a key role in resistance against exogenously-added GT and GT biosynthesis, mainly through the direct regulation of gliT. Furthermore, rglT is important for virulence in chemotherapeutic mice with invasive pulmonary aspergillosis (IPA). The sequence is that of Transcription factor rglT from Aspergillus fumigatus (strain CBS 144.89 / FGSC A1163 / CEA10) (Neosartorya fumigata).